The following is a 301-amino-acid chain: tRNA-cytidine(32) 2-sulfurtransferase (301 aa).

Residues 55–60 (SGGKDS) carry the PP-loop motif motif. Residues cysteine 130, cysteine 133, and cysteine 221 each coordinate [4Fe-4S] cluster.

It belongs to the TtcA family. Homodimer. Mg(2+) serves as cofactor. It depends on [4Fe-4S] cluster as a cofactor.

Its subcellular location is the cytoplasm. It carries out the reaction cytidine(32) in tRNA + S-sulfanyl-L-cysteinyl-[cysteine desulfurase] + AH2 + ATP = 2-thiocytidine(32) in tRNA + L-cysteinyl-[cysteine desulfurase] + A + AMP + diphosphate + H(+). It participates in tRNA modification. Functionally, catalyzes the ATP-dependent 2-thiolation of cytidine in position 32 of tRNA, to form 2-thiocytidine (s(2)C32). The sulfur atoms are provided by the cysteine/cysteine desulfurase (IscS) system. This is tRNA-cytidine(32) 2-sulfurtransferase from Acinetobacter baumannii (strain AB307-0294).